The chain runs to 244 residues: Capsid protein (244 aa).

Positions 1 to 24 (MSTSKRKRGDDANWSKRVTKKKPS) match the Bipartite nuclear localization signal motif. The tract at residues 1-39 (MSTSKRKRGDDANWSKRVTKKKPSSAGLKRAGSKADRPS) is disordered.

The protein belongs to the geminiviridae capsid protein family. As to quaternary structure, homomultimer. Interacts with the movement protein. Binds to single-stranded and double-stranded viral DNA.

It is found in the virion. Its subcellular location is the host nucleus. Its function is as follows. Encapsidates the viral genome into characteristic twinned ('geminate') particles. Binds the genomic viral ssDNA and shuttles it into and out of the cell nucleus. Plays a role in protection of the genome from degradation, virus acquisition and transmission by insect vectors, infectivity, and systemic movement. The CP of monopartite geminiviruses is absolutely essential for virus movement. The chain is Capsid protein from Maize streak virus genotype A (isolate Kenya) (MSV).